Here is a 116-residue protein sequence, read N- to C-terminus: RutC family protein HI_1627 (116 aa).

The protein belongs to the RutC family.

The polypeptide is RutC family protein HI_1627 (Haemophilus influenzae (strain ATCC 51907 / DSM 11121 / KW20 / Rd)).